A 357-amino-acid chain; its full sequence is 3-isopropylmalate dehydrogenase (357 aa).

76-89 (GPQWDTIDPALRPE) contacts NAD(+). Substrate-binding residues include Arg-96, Arg-106, Arg-134, and Asp-224. Residues Asp-224, Asp-248, and Asp-252 each contribute to the Mg(2+) site. Position 282-294 (282-294 (GSAPDIAGQGVAN)) interacts with NAD(+).

The protein belongs to the isocitrate and isopropylmalate dehydrogenases family. LeuB type 1 subfamily. Homodimer. Mg(2+) serves as cofactor. Requires Mn(2+) as cofactor.

It is found in the cytoplasm. It carries out the reaction (2R,3S)-3-isopropylmalate + NAD(+) = 4-methyl-2-oxopentanoate + CO2 + NADH. The protein operates within amino-acid biosynthesis; L-leucine biosynthesis; L-leucine from 3-methyl-2-oxobutanoate: step 3/4. Catalyzes the oxidation of 3-carboxy-2-hydroxy-4-methylpentanoate (3-isopropylmalate) to 3-carboxy-4-methyl-2-oxopentanoate. The product decarboxylates to 4-methyl-2 oxopentanoate. The polypeptide is 3-isopropylmalate dehydrogenase (Xylella fastidiosa (strain 9a5c)).